A 394-amino-acid polypeptide reads, in one-letter code: D-mannose isomerase (394 aa).

Active-site proton donor/acceptor residues include His-251 and His-380.

Belongs to the N-acylglucosamine 2-epimerase family. In terms of assembly, monomer.

It carries out the reaction D-mannose = D-fructose. It catalyses the reaction D-lyxose = D-xylulose. In terms of biological role, catalyzes the reversible isomerization of D-mannose to D-fructose. Can also isomerize D-lyxose, with lower efficiency. In longer reaction with a higher concentration of enzyme, it can isomerize 4-OH D-mannose derivatives (D-talose and 4-O-monosaccharyl-D-mannose). Cannot use D-glucose. In Marinomonas mediterranea (strain ATCC 700492 / JCM 21426 / NBRC 103028 / MMB-1), this protein is D-mannose isomerase.